The following is a 200-amino-acid chain: Polyadenylate-binding protein 1-like 2 (200 aa).

2 consecutive RRM domains span residues 2-80 and 90-166; these read ASLY…WSQR and GNVF…RFKS. Residues 170-200 form a disordered region; sequence REAERGAWARQSTSADVKDFEEDTDEEATLR. A compositionally biased stretch (acidic residues) spans 188–200; that stretch reads DFEEDTDEEATLR.

The sequence is that of Polyadenylate-binding protein 1-like 2 (PABPC1L2A) from Homo sapiens (Human).